A 334-amino-acid polypeptide reads, in one-letter code: N-acetyl-gamma-glutamyl-phosphate reductase (334 aa).

Residue Cys154 is part of the active site.

It belongs to the NAGSA dehydrogenase family. Type 1 subfamily.

It is found in the cytoplasm. The enzyme catalyses N-acetyl-L-glutamate 5-semialdehyde + phosphate + NADP(+) = N-acetyl-L-glutamyl 5-phosphate + NADPH + H(+). It participates in amino-acid biosynthesis; L-arginine biosynthesis; N(2)-acetyl-L-ornithine from L-glutamate: step 3/4. Catalyzes the NADPH-dependent reduction of N-acetyl-5-glutamyl phosphate to yield N-acetyl-L-glutamate 5-semialdehyde. This is N-acetyl-gamma-glutamyl-phosphate reductase from Vibrio vulnificus (strain YJ016).